A 272-amino-acid chain; its full sequence is ATP synthase subunit a (272 aa).

5 consecutive transmembrane segments (helical) span residues 41 to 61 (TLNI…LALF), 102 to 122 (IAPL…MDLV), 147 to 167 (DVNI…FYSI), 212 to 232 (LFGN…LLPW), and 243 to 263 (AIFH…LTIV).

The protein belongs to the ATPase A chain family. F-type ATPases have 2 components, CF(1) - the catalytic core - and CF(0) - the membrane proton channel. CF(1) has five subunits: alpha(3), beta(3), gamma(1), delta(1), epsilon(1). CF(0) has three main subunits: a(1), b(2) and c(9-12). The alpha and beta chains form an alternating ring which encloses part of the gamma chain. CF(1) is attached to CF(0) by a central stalk formed by the gamma and epsilon chains, while a peripheral stalk is formed by the delta and b chains.

It is found in the cell inner membrane. Key component of the proton channel; it plays a direct role in the translocation of protons across the membrane. This Edwardsiella ictaluri (strain 93-146) protein is ATP synthase subunit a.